Consider the following 432-residue polypeptide: D-amino acid dehydrogenase (432 aa).

Val3–Trp17 contributes to the FAD binding site.

The protein belongs to the DadA oxidoreductase family. The cofactor is FAD.

The enzyme catalyses a D-alpha-amino acid + A + H2O = a 2-oxocarboxylate + AH2 + NH4(+). Its pathway is amino-acid degradation; D-alanine degradation; NH(3) and pyruvate from D-alanine: step 1/1. Functionally, oxidative deamination of D-amino acids. In Escherichia coli O45:K1 (strain S88 / ExPEC), this protein is D-amino acid dehydrogenase.